A 449-amino-acid polypeptide reads, in one-letter code: Glucose-6-phosphate isomerase (449 aa).

The active-site Proton donor is Glu291. Residues His312 and Lys426 contribute to the active site.

This sequence belongs to the GPI family.

Its subcellular location is the cytoplasm. The catalysed reaction is alpha-D-glucose 6-phosphate = beta-D-fructose 6-phosphate. The protein operates within carbohydrate biosynthesis; gluconeogenesis. Its pathway is carbohydrate degradation; glycolysis; D-glyceraldehyde 3-phosphate and glycerone phosphate from D-glucose: step 2/4. Its function is as follows. Catalyzes the reversible isomerization of glucose-6-phosphate to fructose-6-phosphate. The chain is Glucose-6-phosphate isomerase from Streptococcus pyogenes serotype M1.